Consider the following 348-residue polypeptide: MKETKITYKDAGVDIDAGNTFVQMIKPLVKATSRPEVLADIGGFGGLFSLNMGKYKHPVLVSGTDGVGTKLKLAFLADRHDTIGIDLVAMCVNDIIVQGAEPLFFLDYLATAKLDPVKAASIIKGVSEGCVQAGCALIGGETAEMPGFYTGDEYDMAGFAVGVVEREKIIDGSSITVGNRLIGLASSGLHSNGYSLARKVILEHMGLGIDDELPGLGKTVAEELLTPTRIYVRSVMNLLRDFNISGLAHITGGGLLENIPRVLPNGCKAVIKKESWEVPEIFRIMQKAGNIEENEMFRTFNCGIGMVLVVPEKEAEEIMIRLSGLNETAFVIGEVAKCDAGKECVELV.

This sequence belongs to the AIR synthase family.

Its subcellular location is the cytoplasm. The enzyme catalyses 2-formamido-N(1)-(5-O-phospho-beta-D-ribosyl)acetamidine + ATP = 5-amino-1-(5-phospho-beta-D-ribosyl)imidazole + ADP + phosphate + H(+). It functions in the pathway purine metabolism; IMP biosynthesis via de novo pathway; 5-amino-1-(5-phospho-D-ribosyl)imidazole from N(2)-formyl-N(1)-(5-phospho-D-ribosyl)glycinamide: step 2/2. The chain is Phosphoribosylformylglycinamidine cyclo-ligase from Geobacter sp. (strain M21).